A 1644-amino-acid chain; its full sequence is Kinesin-like protein unc-104 (1644 aa).

A Kinesin motor domain is found at 3-351; it reads SVKVAVRVRP…LRYADRAKQI (349 aa). 97–104 is a binding site for ATP; sequence GQTGAGKS. Positions 358 to 436 form a coiled coil; it reads NEDANAKLIR…IAELNETWEE (79 aa). Positions 499–565 constitute an FHA domain; that stretch reads TRLGTSEANV…LQTGSRVILG (67 aa). Over residues 574–591 the composition is skewed to basic and acidic residues; it reads HPEQAREKREKPKDKDVG. A disordered region spans residues 574 to 598; that stretch reads HPEQAREKREKPKDKDVGENPGGNA. Residues 631 to 672 are a coiled coil; that stretch reads EQFKREKLAADQEFEEQRKTYEARIDALQKQVEEQSMTMSMY. 2 disordered regions span residues 953 to 985 and 1419 to 1440; these read EQED…LQPG and HMVI…TLPE. The span at 969 to 984 shows a compositional bias: basic and acidic residues; it reads ELHESNEHEPGEHLQP. A compositionally biased stretch (polar residues) spans 1428 to 1437; it reads TPVKDQQTPT. A PH domain is found at 1542-1640; that stretch reads VVARKGYLNV…WLYAINPLLA (99 aa).

It belongs to the TRAFAC class myosin-kinesin ATPase superfamily. Kinesin family. Unc-104 subfamily. Monomer.

Its subcellular location is the cytoplasm. It localises to the cytoskeleton. Its function is as follows. Required for presynaptic maturation, has a role in axonal transport of dense-core vesicles carrying synaptic vesicle precursors, components required for the morphological transformation of axonal growth cones to mature boutons. In Aedes aegypti (Yellowfever mosquito), this protein is Kinesin-like protein unc-104.